Consider the following 260-residue polypeptide: Carbonic anhydrase 2 (260 aa).

Position 2 is an N-acetylserine (S2). S2 is subject to Phosphoserine. Residues 3 to 259 (HHWGYGKHNG…LKNRQIKASF (257 aa)) enclose the Alpha-carbonic anhydrase domain. The active-site Proton donor/acceptor is H64. Positions 94, 96, and 119 each coordinate Zn(2+). Phosphoserine is present on residues S165 and S172. A substrate-binding site is contributed by 198–199 (TT).

This sequence belongs to the alpha-carbonic anhydrase family. Interacts with SLC4A4. Interaction with SLC4A7 regulates SLC4A7 transporter activity. Interacts with SLC26A6 isoform 4 (via C-terminus cytoplasmic domain). The cofactor is Zn(2+). Requires Co(2+) as cofactor.

The protein resides in the cytoplasm. It localises to the cell membrane. The enzyme catalyses hydrogencarbonate + H(+) = CO2 + H2O. The catalysed reaction is urea = cyanamide + H2O. Its activity is regulated as follows. Activated by X-ray, histamine, L-adrenaline, L- and D-phenylalanine, L- and D-histidine, L-His-OMe and beta-Ala-His (carnosine). Competitively inhibited by saccharin, thioxolone, coumarins, 667-coumate, celecoxib (Celebrex), valdecoxib (Bextra), SC-125, SC-560, diclofenac, acetate, azide, bromide, sulfonamide derivatives such as acetazolamide (AZA), methazolamide (MZA), ethoxzolamide (EZA), dichlorophenamide (DCP), brinzolamide, dansylamide, thiabendazole-5-sulfonamide, trifluoromethane sulfonamide and N-hydroxysulfamide, fructose-based sugar sulfamate RWJ-37497, and Foscarnet (phosphonoformate trisodium salt). Repressed strongly by hydrogen sulfide(HS) and weakly by nitrate (NO(3)). Esterase activity weakly reduced by cyanamide. N-hydroxyurea interferes with zinc binding and inhibit activity. In terms of biological role, catalyzes the reversible hydration of carbon dioxide. Can also hydrate cyanamide to urea. Stimulates the chloride-bicarbonate exchange activity of SLC26A6. Essential for bone resorption and osteoclast differentiation. Involved in the regulation of fluid secretion into the anterior chamber of the eye. Contributes to intracellular pH regulation in the duodenal upper villous epithelium during proton-coupled peptide absorption. The chain is Carbonic anhydrase 2 (CA2) from Homo sapiens (Human).